We begin with the raw amino-acid sequence, 85 residues long: Large ribosomal subunit protein bL27 (85 aa).

Residues 1–22 are disordered; that stretch reads MAHKKGVGSTRNGRDSESKRLG.

It belongs to the bacterial ribosomal protein bL27 family.

The polypeptide is Large ribosomal subunit protein bL27 (Geobacter metallireducens (strain ATCC 53774 / DSM 7210 / GS-15)).